The sequence spans 342 residues: Dihydroorotase (342 aa).

The Zn(2+) site is built by His13 and His15. Substrate is bound by residues 15-17 (HLR) and Asn41. Zn(2+)-binding residues include Lys97, His134, and His172. An N6-carboxylysine modification is found at Lys97. His134 contributes to the substrate binding site. Leu217 contributes to the substrate binding site. Residue Asp245 participates in Zn(2+) binding. Residue Asp245 is part of the active site. Residues His249 and Ala261 each contribute to the substrate site.

The protein belongs to the metallo-dependent hydrolases superfamily. DHOase family. Class II DHOase subfamily. Homodimer. Zn(2+) is required as a cofactor.

The enzyme catalyses (S)-dihydroorotate + H2O = N-carbamoyl-L-aspartate + H(+). Its pathway is pyrimidine metabolism; UMP biosynthesis via de novo pathway; (S)-dihydroorotate from bicarbonate: step 3/3. Catalyzes the reversible cyclization of carbamoyl aspartate to dihydroorotate. In Shewanella amazonensis (strain ATCC BAA-1098 / SB2B), this protein is Dihydroorotase.